A 661-amino-acid chain; its full sequence is UvrABC system protein B (661 aa).

One can recognise a Helicase ATP-binding domain in the interval 26–181 (KGIQEGRKHQ…LLRKLVDIQY (156 aa)). 39 to 46 (GATGTGKT) contacts ATP. The short motif at 92-115 (YYDYYQPEAYVPQTDTFIEKDASI) is the Beta-hairpin element. In terms of domain architecture, Helicase C-terminal spans 430 to 596 (QIDDLIGEIQ…TINKEIRDVI (167 aa)). The UVR domain maps to 625-660 (QKVVEQMEHEMKEAARALDFERAAELRDLLLELKAE).

The protein belongs to the UvrB family. In terms of assembly, forms a heterotetramer with UvrA during the search for lesions. Interacts with UvrC in an incision complex.

The protein resides in the cytoplasm. Its function is as follows. The UvrABC repair system catalyzes the recognition and processing of DNA lesions. A damage recognition complex composed of 2 UvrA and 2 UvrB subunits scans DNA for abnormalities. Upon binding of the UvrA(2)B(2) complex to a putative damaged site, the DNA wraps around one UvrB monomer. DNA wrap is dependent on ATP binding by UvrB and probably causes local melting of the DNA helix, facilitating insertion of UvrB beta-hairpin between the DNA strands. Then UvrB probes one DNA strand for the presence of a lesion. If a lesion is found the UvrA subunits dissociate and the UvrB-DNA preincision complex is formed. This complex is subsequently bound by UvrC and the second UvrB is released. If no lesion is found, the DNA wraps around the other UvrB subunit that will check the other stand for damage. The sequence is that of UvrABC system protein B from Bacillus velezensis (strain DSM 23117 / BGSC 10A6 / LMG 26770 / FZB42) (Bacillus amyloliquefaciens subsp. plantarum).